We begin with the raw amino-acid sequence, 442 residues long: 3-isopropylmalate dehydratase large subunit (442 aa).

[4Fe-4S] cluster contacts are provided by cysteine 347, cysteine 407, and cysteine 410.

Belongs to the aconitase/IPM isomerase family. LeuC type 1 subfamily. Heterodimer of LeuC and LeuD. The cofactor is [4Fe-4S] cluster.

It carries out the reaction (2R,3S)-3-isopropylmalate = (2S)-2-isopropylmalate. It participates in amino-acid biosynthesis; L-leucine biosynthesis; L-leucine from 3-methyl-2-oxobutanoate: step 2/4. Its function is as follows. Catalyzes the isomerization between 2-isopropylmalate and 3-isopropylmalate, via the formation of 2-isopropylmaleate. This is 3-isopropylmalate dehydratase large subunit from Buchnera aphidicola subsp. Uroleucon solidaginis.